The chain runs to 152 residues: Deoxyuridine 5'-triphosphate nucleotidohydrolase (152 aa).

Residues 72–74 (RSG), Asn-85, and 89–91 (TVD) each bind substrate.

This sequence belongs to the dUTPase family. Mg(2+) serves as cofactor.

It catalyses the reaction dUTP + H2O = dUMP + diphosphate + H(+). It functions in the pathway pyrimidine metabolism; dUMP biosynthesis; dUMP from dCTP (dUTP route): step 2/2. Its function is as follows. This enzyme is involved in nucleotide metabolism: it produces dUMP, the immediate precursor of thymidine nucleotides and it decreases the intracellular concentration of dUTP so that uracil cannot be incorporated into DNA. This chain is Deoxyuridine 5'-triphosphate nucleotidohydrolase, found in Nitrobacter hamburgensis (strain DSM 10229 / NCIMB 13809 / X14).